The following is a 475-amino-acid chain: MRNFTKQYINGEWVDSASGETIDVINPATEEVMGKIAKGNEEDVNKAVDAADKVYLEFRHSSVEERRELLDKIVKEYQNRKNDLIEAITDELGAPLSVSENVHYQMGLNHFTAARDALDSFQFEEQRGDDLVVKEAIGVAGLVTPWNFPTNQTSLKLAAAFAAGSPVVLKPSEETPFAAIILAEIFDKVGVPKGVFNLVNGDGSGVGNPLSEHPKVRMMSFTGSGPTGSKIMEKAAKDFKKVSLELGGKSPYIVLDDVDVEEAANATTKKVVNNTGQVCTAGTRVLIPESIKEDYLTAVKEAFSKVKVGQPREEGTQVGPIISKKQFDQVQDYIDKGINEGAELFYGGPGKPEGLDKGYFARPTIFINVDNHMTIAQEEIFGPVMSVITYNNLDEAIEIANDTKYGLAGYVIGKDKDTLRHVARSIEAGTIEINEAGRKPDLPFGGYKESGLGREWGDYGIEEFLEVKSIAGYFK.

201–207 (GDGSGVG) contributes to the NAD(+) binding site. Residues E245 and C279 contribute to the active site.

Belongs to the aldehyde dehydrogenase family.

It carries out the reaction an aldehyde + NAD(+) + H2O = a carboxylate + NADH + 2 H(+). The polypeptide is Putative aldehyde dehydrogenase SERP1729 (Staphylococcus epidermidis (strain ATCC 35984 / DSM 28319 / BCRC 17069 / CCUG 31568 / BM 3577 / RP62A)).